A 30-amino-acid chain; its full sequence is Cysteine-rich venom protein mossambin (30 aa).

The tract at residues 1 to 30 (NVDFNSESTRRKKKQNEIVDLHNSLRRTVN) is disordered.

It belongs to the CRISP family. Contains 8 disulfide bonds. Expressed by the venom gland.

It is found in the secreted. In terms of biological role, inhibits calcium-activated potassium channels (KCa), voltage-gated potassium channel (Kv), and the calcium release channel/ryanodine receptor (RyR). The sequence is that of Cysteine-rich venom protein mossambin from Naja mossambica (Mozambique spitting cobra).